Reading from the N-terminus, the 169-residue chain is Der GTPase-activating protein YihI (169 aa).

2 disordered regions span residues 1 to 75 (MKPS…IPLG) and 144 to 169 (GLSYDDDEEEEEDEKQEDMMRLLRGN). Over residues 10-19 (SKGHAKARRK) the composition is skewed to basic residues. The segment covering 20-30 (TREELDQEARD) has biased composition (basic and acidic residues). Residues 31 to 40 (RKRQKKRRGH) are compositionally biased toward basic residues. Positions 49-58 (GNTTSGSKGQ) are enriched in polar residues. Over residues 147 to 159 (YDDDEEEEEDEKQ) the composition is skewed to acidic residues. The span at 160–169 (EDMMRLLRGN) shows a compositional bias: basic and acidic residues.

It belongs to the YihI family. As to quaternary structure, interacts with Der.

Functionally, a GTPase-activating protein (GAP) that modifies Der/EngA GTPase function. May play a role in ribosome biogenesis. This chain is Der GTPase-activating protein YihI, found in Escherichia coli (strain 55989 / EAEC).